Reading from the N-terminus, the 281-residue chain is Phosphatidylserine decarboxylase proenzyme (281 aa).

Active-site charge relay system; for autoendoproteolytic cleavage activity residues include D90, H143, and S248. The active-site Schiff-base intermediate with substrate; via pyruvic acid; for decarboxylase activity is S248. S248 carries the post-translational modification Pyruvic acid (Ser); by autocatalysis.

Belongs to the phosphatidylserine decarboxylase family. PSD-B subfamily. Prokaryotic type I sub-subfamily. As to quaternary structure, heterodimer of a large membrane-associated beta subunit and a small pyruvoyl-containing alpha subunit. The cofactor is pyruvate. In terms of processing, is synthesized initially as an inactive proenzyme. Formation of the active enzyme involves a self-maturation process in which the active site pyruvoyl group is generated from an internal serine residue via an autocatalytic post-translational modification. Two non-identical subunits are generated from the proenzyme in this reaction, and the pyruvate is formed at the N-terminus of the alpha chain, which is derived from the carboxyl end of the proenzyme. The autoendoproteolytic cleavage occurs by a canonical serine protease mechanism, in which the side chain hydroxyl group of the serine supplies its oxygen atom to form the C-terminus of the beta chain, while the remainder of the serine residue undergoes an oxidative deamination to produce ammonia and the pyruvoyl prosthetic group on the alpha chain. During this reaction, the Ser that is part of the protease active site of the proenzyme becomes the pyruvoyl prosthetic group, which constitutes an essential element of the active site of the mature decarboxylase.

Its subcellular location is the cell membrane. It catalyses the reaction a 1,2-diacyl-sn-glycero-3-phospho-L-serine + H(+) = a 1,2-diacyl-sn-glycero-3-phosphoethanolamine + CO2. It functions in the pathway phospholipid metabolism; phosphatidylethanolamine biosynthesis; phosphatidylethanolamine from CDP-diacylglycerol: step 2/2. In terms of biological role, catalyzes the formation of phosphatidylethanolamine (PtdEtn) from phosphatidylserine (PtdSer). The protein is Phosphatidylserine decarboxylase proenzyme of Francisella philomiragia subsp. philomiragia (strain ATCC 25017 / CCUG 19701 / FSC 153 / O#319-036).